Consider the following 956-residue polypeptide: Glycine dehydrogenase (decarboxylating) 2 (956 aa).

An N6-(pyridoxal phosphate)lysine modification is found at K706.

This sequence belongs to the GcvP family. As to quaternary structure, the glycine cleavage system is composed of four proteins: P, T, L and H. The cofactor is pyridoxal 5'-phosphate.

The catalysed reaction is N(6)-[(R)-lipoyl]-L-lysyl-[glycine-cleavage complex H protein] + glycine + H(+) = N(6)-[(R)-S(8)-aminomethyldihydrolipoyl]-L-lysyl-[glycine-cleavage complex H protein] + CO2. In terms of biological role, the glycine cleavage system catalyzes the degradation of glycine. The P protein binds the alpha-amino group of glycine through its pyridoxal phosphate cofactor; CO(2) is released and the remaining methylamine moiety is then transferred to the lipoamide cofactor of the H protein. The sequence is that of Glycine dehydrogenase (decarboxylating) 2 from Colwellia psychrerythraea (strain 34H / ATCC BAA-681) (Vibrio psychroerythus).